The sequence spans 208 residues: FMN-dependent NADH:quinone oxidoreductase 1 (208 aa).

This sequence belongs to the azoreductase type 1 family. As to quaternary structure, homodimer. FMN serves as cofactor.

It carries out the reaction 2 a quinone + NADH + H(+) = 2 a 1,4-benzosemiquinone + NAD(+). The enzyme catalyses N,N-dimethyl-1,4-phenylenediamine + anthranilate + 2 NAD(+) = 2-(4-dimethylaminophenyl)diazenylbenzoate + 2 NADH + 2 H(+). Functionally, quinone reductase that provides resistance to thiol-specific stress caused by electrophilic quinones. Its function is as follows. Also exhibits azoreductase activity. Catalyzes the reductive cleavage of the azo bond in aromatic azo compounds to the corresponding amines. This Bacillus cereus (strain ATCC 14579 / DSM 31 / CCUG 7414 / JCM 2152 / NBRC 15305 / NCIMB 9373 / NCTC 2599 / NRRL B-3711) protein is FMN-dependent NADH:quinone oxidoreductase 1.